A 213-amino-acid chain; its full sequence is MKKLLKQSLLGFALVSMTGAAFADAQSVAELQRRLEQVSQYSADFDQTVRSSKGKQIQSGKGKFQVKRPNLFRMDTKSPQENLIVSDGANLWFYDSFVSQVTVNTVQDAVNNTPFVLLTSSDKSHWDQYDVTQNADTFVLKPKSKKSNLKQFDVRIDQSGMLKGFSTIERDGQSNLYVLRNITGGGVSSDLFKFSVPKGAELDDQRGGKKSKK.

The signal sequence occupies residues 1 to 23 (MKKLLKQSLLGFALVSMTGAAFA).

It belongs to the LolA family. As to quaternary structure, monomer.

The protein localises to the periplasm. Its function is as follows. Participates in the translocation of lipoproteins from the inner membrane to the outer membrane. Only forms a complex with a lipoprotein if the residue after the N-terminal Cys is not an aspartate (The Asp acts as a targeting signal to indicate that the lipoprotein should stay in the inner membrane). In Actinobacillus pleuropneumoniae serotype 3 (strain JL03), this protein is Outer-membrane lipoprotein carrier protein.